A 515-amino-acid polypeptide reads, in one-letter code: Synaptic vesicular amine transporter (515 aa).

The Cytoplasmic portion of the chain corresponds to 1–20 (MALSDLVLLRWLRDSRHSRK). The helical transmembrane segment at 21–41 (LILFIVFLALLLDNMLLTVVV) threads the bilayer. At 42-130 (PIIPSYLYSI…EDRDLLNENV (89 aa)) the chain is on the lumenal, vesicle side. Residues Asn56, Asn80, Asn81, Asn89, and Asn111 are each glycosylated (N-linked (GlcNAc...) asparagine). A disulfide bridge connects residues Cys118 and Cys325. The helical transmembrane segment at 131 to 151 (QVGLLFASKATVQLLTNPFIG) threads the bilayer. The Cytoplasmic portion of the chain corresponds to 152–160 (LLTNRIGYP). The helical transmembrane segment at 161–181 (IPMFAGFCIMFISTVMFAFSS) threads the bilayer. Over 182 to 190 (SYAFLLIAR) the chain is Lumenal, vesicle. A helical membrane pass occupies residues 191 to 211 (SLQGIGSSCSSVAGMGMLASV). At 212-220 (YTDDEERGK) the chain is on the cytoplasmic side. The helical transmembrane segment at 221 to 243 (PMGIALGGLAMGVLVGPPFGSVL) threads the bilayer. Serotonin-binding residues include Leu229 and Val233. The Lumenal, vesicle portion of the chain corresponds to 244–249 (YEFVGK). The chain crosses the membrane as a helical span at residues 250-272 (TAPFLVLAALVLLDGAIQLFVLQ). Residues 273-292 (PSRVQPESQKGTPLTTLLKD) are Cytoplasmic-facing. Residues 293 to 312 (PYILIAAGSICFANMGIAML) traverse the membrane as a helical segment. Residues Asn306, Ile309, Glu313, Phe335, and Tyr342 each coordinate serotonin. Over 313–329 (EPALPIWMMETMCSRKW) the chain is Lumenal, vesicle. The helical transmembrane segment at 330–353 (QLGVAFLPASISYLIGTNIFGILA) threads the bilayer. The Cytoplasmic portion of the chain corresponds to 354–358 (HKMGR). Residues 359-379 (WLCALLGMVIVGISILCIPFA) traverse the membrane as a helical segment. Residues 380–390 (KNIYGLIAPNF) are Lumenal, vesicle-facing. A helical transmembrane segment spans residues 391 to 411 (GVGFAIGMVDSSMMPIMGYLV). A serotonin-binding site is contributed by Asp400. Over 412-415 (DLRH) the chain is Cytoplasmic. Residues 416–436 (VSVYGSVYAIADVAFCMGYAI) form a helical membrane-spanning segment. Serotonin is bound at residue Tyr434. Topologically, residues 437–441 (GPSAG) are lumenal, vesicle. The chain crosses the membrane as a helical span at residues 442–463 (GAIAKAIGFPWLMTIIGIIDIA). The Cytoplasmic portion of the chain corresponds to 464-515 (FAPLCFFLRSPPAKEEKMAILMDHNCPIKRKMYTQNNVQSYPIGDDEESESD). A phosphoserine; by CK2 mark is found at Ser512 and Ser514.

The protein belongs to the major facilitator superfamily. Vesicular transporter family. In terms of assembly, interacts with SLC6A3. As to expression, expressed in the substantia nigra and the tuberomammillary nucleus of the posterior hypothalamus. Expressed in stomach, in particular in varicose nerve fibers and enterochromaffin-like cells in the corpus region (at protein level).

It localises to the cytoplasmic vesicle. Its subcellular location is the secretory vesicle. It is found in the synaptic vesicle membrane. The protein resides in the secretory vesicle membrane. The protein localises to the cell projection. It localises to the axon. Its subcellular location is the dendrite. The enzyme catalyses serotonin(in) + 2 H(+)(out) = serotonin(out) + 2 H(+)(in). The catalysed reaction is dopamine(in) + 2 H(+)(out) = dopamine(out) + 2 H(+)(in). It carries out the reaction histamine(in) + 2 H(+)(out) = histamine(out) + 2 H(+)(in). With respect to regulation, strongly inhibited by reserpine and tetrabenazine. Also inhibited to a lesser extent by ketanserin and fenfluramine. Reserpine and ketanserin inhibit by blocking the substrate-binding pocket. Tetrabenazine traps SLC18A2/VMAT2 in an occluded conformation and its inhibition is specific to SLC18A2/VMAT2 but not SLC18A1/VMAT1. Electrogenic antiporter that exchanges one cationic monoamine with two intravesicular protons across the membrane of secretory and synaptic vesicles. Uses the electrochemical proton gradient established by the V-type proton-pump ATPase to accumulate high concentrations of monoamines inside the vesicles prior to their release via exocytosis. Transports a variety of catecholamines such as dopamine, adrenaline and noradrenaline, histamine, and indolamines such as serotonin. Regulates the transvesicular monoaminergic gradient that determines the quantal size. Mediates somatodendritic dopamine release in hippocampal neurons, likely as part of a regulated secretory pathway that integrates retrograde synaptic signals. Acts as a primary transporter for striatal dopamine loading ensuring impulse-dependent release of dopamine at the synaptic cleft. Responsible for histamine and serotonin storage and subsequent corelease from mast cell granules. This Rattus norvegicus (Rat) protein is Synaptic vesicular amine transporter (Slc18a2).